We begin with the raw amino-acid sequence, 275 residues long: Alpha carbonic anhydrase 7 (275 aa).

Residues 1–27 (MVNYSSISCIFFVALFSIFTIVSISSA) form the signal peptide. Residues Asn3 and Asn96 are each glycosylated (N-linked (GlcNAc...) asparagine). The Alpha-carbonic anhydrase domain occupies 38-272 (REFNYKKNDE…TNKRIVHLYR (235 aa)). Cysteines 63 and 222 form a disulfide. Residue His104 is the Proton acceptor of the active site. Zn(2+) contacts are provided by His130, His132, and His149. 218-219 (TT) contributes to the substrate binding site. A glycan (N-linked (GlcNAc...) asparagine) is linked at Asn225.

This sequence belongs to the alpha-class carbonic anhydrase family. The cofactor is Zn(2+). In terms of processing, N-glycosylated.

The protein localises to the plastid. The protein resides in the chloroplast stroma. It carries out the reaction hydrogencarbonate + H(+) = CO2 + H2O. Its function is as follows. Reversible hydration of carbon dioxide. The chain is Alpha carbonic anhydrase 7 (ACA7) from Arabidopsis thaliana (Mouse-ear cress).